A 145-amino-acid chain; its full sequence is Probable D-aminoacyl-tRNA deacylase (145 aa).

It belongs to the DTD family. As to quaternary structure, homodimer.

It localises to the cytoplasm. The catalysed reaction is glycyl-tRNA(Ala) + H2O = tRNA(Ala) + glycine + H(+). It carries out the reaction a D-aminoacyl-tRNA + H2O = a tRNA + a D-alpha-amino acid + H(+). An aminoacyl-tRNA editing enzyme that deacylates mischarged D-aminoacyl-tRNAs. Also deacylates mischarged glycyl-tRNA(Ala), protecting cells against glycine mischarging by AlaRS. Acts via tRNA-based rather than protein-based catalysis; rejects L-amino acids rather than detecting D-amino acids in the active site. By recycling D-aminoacyl-tRNA to D-amino acids and free tRNA molecules, this enzyme counteracts the toxicity associated with the formation of D-aminoacyl-tRNA entities in vivo and helps enforce protein L-homochirality. The polypeptide is Probable D-aminoacyl-tRNA deacylase (Shigella flexneri serotype 5b (strain 8401)).